The primary structure comprises 262 residues: Acyl-[acyl-carrier-protein]--UDP-N-acetylglucosamine O-acyltransferase (262 aa).

This sequence belongs to the transferase hexapeptide repeat family. LpxA subfamily. As to quaternary structure, homotrimer.

The protein resides in the cytoplasm. It carries out the reaction a (3R)-hydroxyacyl-[ACP] + UDP-N-acetyl-alpha-D-glucosamine = a UDP-3-O-[(3R)-3-hydroxyacyl]-N-acetyl-alpha-D-glucosamine + holo-[ACP]. It functions in the pathway glycolipid biosynthesis; lipid IV(A) biosynthesis; lipid IV(A) from (3R)-3-hydroxytetradecanoyl-[acyl-carrier-protein] and UDP-N-acetyl-alpha-D-glucosamine: step 1/6. Its function is as follows. Involved in the biosynthesis of lipid A, a phosphorylated glycolipid that anchors the lipopolysaccharide to the outer membrane of the cell. This is Acyl-[acyl-carrier-protein]--UDP-N-acetylglucosamine O-acyltransferase from Paracidovorax citrulli (strain AAC00-1) (Acidovorax citrulli).